The sequence spans 429 residues: 3-phosphoshikimate 1-carboxyvinyltransferase (429 aa).

Lys22, Ser23, and Arg27 together coordinate 3-phosphoshikimate. Lys22 is a binding site for phosphoenolpyruvate. Residues Gly94 and Arg122 each contribute to the phosphoenolpyruvate site. Ser167, Gln169, Asp315, and Lys342 together coordinate 3-phosphoshikimate. Gln169 lines the phosphoenolpyruvate pocket. The Proton acceptor role is filled by Asp315. Arg346 and Arg388 together coordinate phosphoenolpyruvate.

Belongs to the EPSP synthase family. In terms of assembly, monomer.

It is found in the cytoplasm. It catalyses the reaction 3-phosphoshikimate + phosphoenolpyruvate = 5-O-(1-carboxyvinyl)-3-phosphoshikimate + phosphate. The protein operates within metabolic intermediate biosynthesis; chorismate biosynthesis; chorismate from D-erythrose 4-phosphate and phosphoenolpyruvate: step 6/7. Functionally, catalyzes the transfer of the enolpyruvyl moiety of phosphoenolpyruvate (PEP) to the 5-hydroxyl of shikimate-3-phosphate (S3P) to produce enolpyruvyl shikimate-3-phosphate and inorganic phosphate. This chain is 3-phosphoshikimate 1-carboxyvinyltransferase, found in Geobacter sulfurreducens (strain ATCC 51573 / DSM 12127 / PCA).